Here is a 1485-residue protein sequence, read N- to C-terminus: Dicer-like protein 2 (1485 aa).

Low complexity predominate over residues 1-11 (MSSQDESASSS). Residues 1 to 61 (MSSQDESASS…EPQPSGNGPR (61 aa)) form a disordered region. Residues 72-250 (MFQASMQQNI…MEDLESSLDS (179 aa)) form the Helicase ATP-binding domain. Residue 85–92 (MDTGSGKT) coordinates ATP. The DEAH box motif lies at 193 to 196 (DEAH). A Helicase C-terminal domain is found at 415 to 579 (KLQVLLRILR…RYENDMRELD (165 aa)). A Dicer dsRNA-binding fold domain is found at 609–712 (AKGHLEHFCR…LPIRESDFVD (104 aa)). RNase III domains are found at residues 988-1127 (AQEL…IEGG) and 1168-1358 (LGPL…VDSG). The Mg(2+) site is built by Glu1208, Asp1344, and Glu1347. In terms of domain architecture, DRBM spans 1388 to 1469 (HPKEELGRVA…ALEVIRVWEE (82 aa)).

Belongs to the helicase family. Dicer subfamily. Mg(2+) serves as cofactor. The cofactor is Mn(2+).

Dicer-like endonuclease involved in cleaving double-stranded RNA in the RNA interference (RNAi) pathway. Produces 21 to 25 bp dsRNAs (siRNAs) which target the selective destruction of homologous RNAs leading to sequence-specific suppression of gene expression, called post-transcriptional gene silencing (PTGS). Part of a broad host defense response against viral infection and transposons. In Pyricularia oryzae (strain 70-15 / ATCC MYA-4617 / FGSC 8958) (Rice blast fungus), this protein is Dicer-like protein 2 (DCL2).